A 533-amino-acid chain; its full sequence is GMP synthase [glutamine-hydrolyzing] (533 aa).

Residues 22–215 (RILILDFGSQ…THNVAGCSGT (194 aa)) enclose the Glutamine amidotransferase type-1 domain. Catalysis depends on C99, which acts as the Nucleophile. Active-site residues include H189 and E191. The 193-residue stretch at 216–408 (WTMAGFRELE…LGIPESIVGR (193 aa)) folds into the GMPS ATP-PPase domain. 243 to 249 (SGGVDSS) serves as a coordination point for ATP.

In terms of assembly, homodimer.

It carries out the reaction XMP + L-glutamine + ATP + H2O = GMP + L-glutamate + AMP + diphosphate + 2 H(+). Its pathway is purine metabolism; GMP biosynthesis; GMP from XMP (L-Gln route): step 1/1. In terms of biological role, catalyzes the synthesis of GMP from XMP. The chain is GMP synthase [glutamine-hydrolyzing] from Gluconobacter oxydans (strain 621H) (Gluconobacter suboxydans).